A 118-amino-acid polypeptide reads, in one-letter code: Hisactophilin-2 (118 aa).

Gly2 is lipidated: N-myristoyl glycine. Positions 8–109 (AHNGHYLSAE…HVSTSHHHDH (102 aa)) are contains several HHXH repeats. Repeat copies occupy residues 34–46 (FHIE…VALR) and 74–86 (FHLE…VSIK). Positions 34 to 86 (FHIENHGSKVALRTHCGKYVSIGDHKQVYLSHHLHGDHSLFHLEHHHGKVSIK) are 2 X 13 AA approximate repeats. A disordered region spans residues 99–118 (GHVSTSHHHDHHATFEEHIL).

It belongs to the hisactophilin family. In terms of assembly, homodimer or heterodimer of hatA and hatB, linked by a disulfide bond. In terms of processing, phosphorylated.

Its subcellular location is the cytoplasm. The protein localises to the cell membrane. Functionally, may act as an intracellular pH sensor that links chemotactic signals to responses in the microfilament system of the cells by nucleating actin polymerization or stabilizing the filaments. This chain is Hisactophilin-2 (hatB), found in Dictyostelium discoideum (Social amoeba).